The chain runs to 600 residues: ATP-dependent zinc metalloprotease FtsH 1 (600 aa).

Over 1–8 the chain is Cytoplasmic; sequence MKTHYFKK. A helical transmembrane segment spans residues 9–29; sequence IFNLKFLVIFFSILFCILLIL. Topologically, residues 30–130 are extracellular; it reads DLTFERRIKG…PKTDFHLSEL (101 aa). Residues 131-151 traverse the membrane as a helical segment; the sequence is ILSLVPIVSSTIFMFYIISNI. Over 152–600 the chain is Cytoplasmic; that stretch reads KKSSGKLNSN…IEQLVVNTKK (449 aa). 215-222 is an ATP binding site; the sequence is GPPGTGKT. His437 serves as a coordination point for Zn(2+). Residue Glu438 is part of the active site. Residues His441 and Asp513 each contribute to the Zn(2+) site.

It in the central section; belongs to the AAA ATPase family. This sequence in the C-terminal section; belongs to the peptidase M41 family. Homohexamer. It depends on Zn(2+) as a cofactor.

It localises to the cell membrane. Its function is as follows. Acts as a processive, ATP-dependent zinc metallopeptidase for both cytoplasmic and membrane proteins. Plays a role in the quality control of integral membrane proteins. The protein is ATP-dependent zinc metalloprotease FtsH 1 of Phytoplasma mali (strain AT).